Reading from the N-terminus, the 834-residue chain is MAP kinase phosphatase with leucine-rich repeats protein 1 (834 aa).

Residues 1–103 are disordered; that stretch reads MIFKKLFSKG…GSGTTKESKK (103 aa). Over residues 36 to 78 the composition is skewed to low complexity; that stretch reads GSGTNTNGLSNSTTNPSSIHSTPTTPTTTASTNLTNSNKLSTL. A compositionally biased stretch (polar residues) spans 79-98; that stretch reads APITNGNRSLRGSKDGSGTT. 10 LRR repeats span residues 160-181, 183-204, 206-226, 229-251, 252-273, 274-292, 298-319, 321-342, 345-366, and 368-389; these read ELRSLILDFNKITEIPEQIGLL, NLKHLSLAANQLSQVPEFLSQL, SLESLELGINQFTSFPLNICK, SLTLLRLETNNIKSLPDDFINLE, NLKDLSLLDNQLKEIPDSLPNN, IEKLNLGCNDIINSYSKSL, SLTTLNLSENKIEVLDESLSCL, NVKTLILDCNMIKVIPGSVLGS, SLVTLNLPHNFISDLPAEIVTL, and NLRIIDLRGNNFEFCKNYPSSE. The interval 503–584 is disordered; the sequence is YEKQENDENN…ENPLKESQGK (82 aa). Positions 511-536 are enriched in polar residues; sequence NNSVTLETTTTISIASDNTDEASIQI. 2 stretches are compositionally biased toward basic and acidic residues: residues 538–554 and 569–582; these read QKEDGDKENLENDDKLL and KQQEQQENPLKESQ. Positions 555-615 form a coiled coil; sequence QESFSENNNN…IRLEKIKYQE (61 aa). Positions 695 to 834 constitute a Tyrosine-protein phosphatase domain; that stretch reads VPDLIIDKLY…LKKFEKDLSK (140 aa). The Phosphocysteine intermediate role is filled by cysteine 778.

Belongs to the protein-tyrosine phosphatase family. Non-receptor class dual specificity subfamily.

It carries out the reaction O-phospho-L-tyrosyl-[protein] + H2O = L-tyrosyl-[protein] + phosphate. The catalysed reaction is O-phospho-L-seryl-[protein] + H2O = L-seryl-[protein] + phosphate. The enzyme catalyses O-phospho-L-threonyl-[protein] + H2O = L-threonyl-[protein] + phosphate. Functionally, probable phosphatase with dual specificity toward Ser/Thr and Tyr-containing proteins. Dephosphorylates pNPP, in vitro. Essential for proper regulation of erkB (erk2) and optimal motility during development. The sequence is that of MAP kinase phosphatase with leucine-rich repeats protein 1 (mpl1) from Dictyostelium discoideum (Social amoeba).